The sequence spans 251 residues: UPF0309 protein SGR_3073 (251 aa).

The region spanning 36-221 is the SIS domain; sequence VADTVASGGR…EQLVARGIEP (186 aa).

It belongs to the UPF0309 family.

This chain is UPF0309 protein SGR_3073, found in Streptomyces griseus subsp. griseus (strain JCM 4626 / CBS 651.72 / NBRC 13350 / KCC S-0626 / ISP 5235).